The following is a 319-amino-acid chain: Phosphoenolpyruvate transferase (319 aa).

Asp-50 contacts 7,8-didemethyl-8-hydroxy-5-deazariboflavin.

The protein belongs to the CofD family. In terms of assembly, homodimer. It depends on Mg(2+) as a cofactor.

It catalyses the reaction enolpyruvoyl-2-diphospho-5'-guanosine + 7,8-didemethyl-8-hydroxy-5-deazariboflavin = dehydro coenzyme F420-0 + GMP + H(+). It participates in cofactor biosynthesis; coenzyme F420 biosynthesis. Its function is as follows. Catalyzes the transfer of the phosphoenolpyruvate moiety from enoylpyruvoyl-2-diphospho-5'-guanosine (EPPG) to 7,8-didemethyl-8-hydroxy-5-deazariboflavin (FO) with the formation of dehydro coenzyme F420-0 and GMP. This Streptomyces avermitilis (strain ATCC 31267 / DSM 46492 / JCM 5070 / NBRC 14893 / NCIMB 12804 / NRRL 8165 / MA-4680) protein is Phosphoenolpyruvate transferase.